The chain runs to 595 residues: NADH-quinone oxidoreductase subunit C/D (595 aa).

Positions M1–Q186 are NADH dehydrogenase I subunit C. The segment at D210–R595 is NADH dehydrogenase I subunit D.

This sequence in the N-terminal section; belongs to the complex I 30 kDa subunit family. In the C-terminal section; belongs to the complex I 49 kDa subunit family. NDH-1 is composed of 13 different subunits. Subunits NuoB, CD, E, F, and G constitute the peripheral sector of the complex.

It localises to the cell inner membrane. The catalysed reaction is a quinone + NADH + 5 H(+)(in) = a quinol + NAD(+) + 4 H(+)(out). NDH-1 shuttles electrons from NADH, via FMN and iron-sulfur (Fe-S) centers, to quinones in the respiratory chain. The immediate electron acceptor for the enzyme in this species is believed to be ubiquinone. Couples the redox reaction to proton translocation (for every two electrons transferred, four hydrogen ions are translocated across the cytoplasmic membrane), and thus conserves the redox energy in a proton gradient. In Psychrobacter sp. (strain PRwf-1), this protein is NADH-quinone oxidoreductase subunit C/D.